The chain runs to 503 residues: Ribonuclease Y (503 aa).

A helical membrane pass occupies residues glycine 2–leucine 22. Residues threonine 193–leucine 253 form the KH domain. Positions valine 319 to serine 412 constitute an HD domain.

Belongs to the RNase Y family.

The protein resides in the cell membrane. Functionally, endoribonuclease that initiates mRNA decay. The protein is Ribonuclease Y of Mesoplasma florum (strain ATCC 33453 / NBRC 100688 / NCTC 11704 / L1) (Acholeplasma florum).